An 85-amino-acid polypeptide reads, in one-letter code: Putative membrane protein insertion efficiency factor (85 aa).

Belongs to the UPF0161 family.

It is found in the cell inner membrane. In terms of biological role, could be involved in insertion of integral membrane proteins into the membrane. The sequence is that of Putative membrane protein insertion efficiency factor from Phenylobacterium zucineum (strain HLK1).